Reading from the N-terminus, the 292-residue chain is 2-(5''-triphosphoribosyl)-3'-dephosphocoenzyme-A synthase (292 aa).

It belongs to the CitG/MdcB family.

It carries out the reaction 3'-dephospho-CoA + ATP = 2'-(5''-triphospho-alpha-D-ribosyl)-3'-dephospho-CoA + adenine. Catalyzes the formation of 2-(5''-triphosphoribosyl)-3'-dephosphocoenzyme-A, the precursor of the prosthetic group of the holo-acyl carrier protein (gamma chain) of citrate lyase, from ATP and dephospho-CoA. This is 2-(5''-triphosphoribosyl)-3'-dephosphocoenzyme-A synthase from Escherichia coli O17:K52:H18 (strain UMN026 / ExPEC).